The following is a 292-amino-acid chain: MNNHFKCIGIVGHPRHPTALTTHEMLYRWLCTKGYEVIVEQQIAHELQLKNVKTGTLAEIGQLADLAVVVGGDGNMLGAARTLARYDIKVIGINRGNLGFLTDLDPDNAQQQLADVLEGHYTSEKRFLLEAQVCQQDCQKRISTAINEVVLHPGKVAHMIEFEVYIDEIFAFSQRSDGLIISTPTGSTAYSLSAGGPILTPSLDAITLVPMFPHTLSARPLVINSSSTIRLRFSHRRNDLEISCDSQIALPIQEGEDVLIRRCDYHLNLIHPKDYSYLNTLSTKLGWSKKLF.

The Proton acceptor role is filled by D73. Residues 73–74 (DG), 147–148 (NE), H158, R175, D177, 188–193 (TAYSLS), and Q247 each bind NAD(+).

It belongs to the NAD kinase family. A divalent metal cation is required as a cofactor.

The protein localises to the cytoplasm. It carries out the reaction NAD(+) + ATP = ADP + NADP(+) + H(+). In terms of biological role, involved in the regulation of the intracellular balance of NAD and NADP, and is a key enzyme in the biosynthesis of NADP. Catalyzes specifically the phosphorylation on 2'-hydroxyl of the adenosine moiety of NAD to yield NADP. The protein is NAD kinase of Shigella dysenteriae serotype 1 (strain Sd197).